The primary structure comprises 295 residues: Ribosomal protein L11 methyltransferase (295 aa).

S-adenosyl-L-methionine contacts are provided by threonine 150, glycine 171, aspartate 193, and asparagine 232.

This sequence belongs to the methyltransferase superfamily. PrmA family.

It localises to the cytoplasm. The enzyme catalyses L-lysyl-[protein] + 3 S-adenosyl-L-methionine = N(6),N(6),N(6)-trimethyl-L-lysyl-[protein] + 3 S-adenosyl-L-homocysteine + 3 H(+). In terms of biological role, methylates ribosomal protein L11. This is Ribosomal protein L11 methyltransferase from Neisseria meningitidis serogroup A / serotype 4A (strain DSM 15465 / Z2491).